Consider the following 168-residue polypeptide: Pathogenesis-related protein 1B (168 aa).

The N-terminal stretch at 1–30 (MGFFLFSQMPSFFLVSTLLLFLIISHSSHA) is a signal peptide. An SCP domain is found at 38 to 156 (LDAHNTARAD…NGGYVVSCNY (119 aa)).

This sequence belongs to the CRISP family. Three disulfide bonds are present.

It localises to the vacuole. Probably involved in the defense reaction of plants against pathogens. This is Pathogenesis-related protein 1B from Nicotiana tabacum (Common tobacco).